Here is a 455-residue protein sequence, read N- to C-terminus: Phosphoglucosamine mutase (455 aa).

The active-site Phosphoserine intermediate is the S104. Positions 104, 253, 255, and 257 each coordinate Mg(2+). The residue at position 104 (S104) is a Phosphoserine.

The protein belongs to the phosphohexose mutase family. Requires Mg(2+) as cofactor. Post-translationally, activated by phosphorylation.

The catalysed reaction is alpha-D-glucosamine 1-phosphate = D-glucosamine 6-phosphate. Catalyzes the conversion of glucosamine-6-phosphate to glucosamine-1-phosphate. This is Phosphoglucosamine mutase from Psychrobacter cryohalolentis (strain ATCC BAA-1226 / DSM 17306 / VKM B-2378 / K5).